We begin with the raw amino-acid sequence, 319 residues long: uncharacterized protein (319 aa).

The MPN domain occupies 29–164; sequence VNISSLALLK…LDAFRSVNPL (136 aa). Zn(2+) contacts are provided by H111, H113, and D124. The JAMM motif signature appears at 111–124; that stretch reads HSHPGFGCWLSSVD.

This sequence belongs to the peptidase M67A family.

This is an uncharacterized protein from Caenorhabditis elegans.